The primary structure comprises 172 residues: Cold-inducible RNA-binding protein (172 aa).

The region spanning 6–84 (GKLFVGGLSF…RQIRVDQAGK (79 aa)) is the RRM domain. The tract at residues 69–172 (GKSVDGRQIR…SYDSYATHNE (104 aa)) is disordered. 2 stretches are compositionally biased toward gly residues: residues 93–106 (YRGG…FFRG) and 114–125 (FSRGGGDRGYGG). Phosphoserine is present on residues S130, S138, S146, S156, S159, and S163. The segment covering 138–172 (SRDYYSSRSQSGGYSDRSSGGSYRDSYDSYATHNE) has biased composition (low complexity).

In terms of assembly, interacts with EIF4G1. Associates with ribosomes. Post-translationally, methylated on arginine residues. Methylation of the RGG motifs is a prerequisite for recruitment into SGs. Phosphorylated by CK2, GSK3A and GSK3B. Phosphorylation by GSK3B increases RNA-binding activity to the TXN 3'-UTR transcript upon exposure to UV radiation.

It localises to the nucleus. The protein resides in the nucleoplasm. The protein localises to the cytoplasm. Cold-inducible mRNA binding protein that plays a protective role in the genotoxic stress response by stabilizing transcripts of genes involved in cell survival. Acts as a translational activator. Seems to play an essential role in cold-induced suppression of cell proliferation. Binds specifically to the 3'-untranslated regions (3'-UTRs) of stress-responsive transcripts RPA2 and TXN. Acts as a translational repressor. Promotes assembly of stress granules (SGs), when overexpressed. This chain is Cold-inducible RNA-binding protein (CIRBP), found in Pongo abelii (Sumatran orangutan).